We begin with the raw amino-acid sequence, 259 residues long: Probable ABC transporter permease protein RT0041 (259 aa).

Helical transmembrane passes span 20 to 40, 49 to 69, 148 to 168, 195 to 215, and 237 to 257; these read VGIFALFSFIAISSIIKPPLY, LFIGFHSLPVVAMTTFFSGAV, VIAAIITMPCLVLIGDVIGVM, LIDVISGLVKATVFGFIISII, and AVVNSSILILISNYLITELLF.

The protein belongs to the MlaE permease family.

It is found in the cell inner membrane. Could be part of an ABC transporter complex. The chain is Probable ABC transporter permease protein RT0041 from Rickettsia typhi (strain ATCC VR-144 / Wilmington).